We begin with the raw amino-acid sequence, 212 residues long: MSLFDKKHLVSPADALPGRNTPMPVATLHAVNGHSMTNVPDGMEIAIFAMGCFWGVESLFWQLPGVYSTAAGYTGGYTPNPTYREVCSGDTGHAEAVRIVYDPSVISYEQLLQVFWENHDPAQGMRQGNDHGTQYRSAIYPLTPEQDAAARASLERFQAAMLAADDDRHITTEIANATPFYYAEDDHQQYLHKNPYGYCGIGGIGVCLPPEA.

Cys52 is a catalytic residue.

The protein belongs to the MsrA Met sulfoxide reductase family.

The enzyme catalyses L-methionyl-[protein] + [thioredoxin]-disulfide + H2O = L-methionyl-(S)-S-oxide-[protein] + [thioredoxin]-dithiol. It carries out the reaction [thioredoxin]-disulfide + L-methionine + H2O = L-methionine (S)-S-oxide + [thioredoxin]-dithiol. Functionally, has an important function as a repair enzyme for proteins that have been inactivated by oxidation. Catalyzes the reversible oxidation-reduction of methionine sulfoxide in proteins to methionine. This Shigella boydii serotype 18 (strain CDC 3083-94 / BS512) protein is Peptide methionine sulfoxide reductase MsrA.